Here is a 509-residue protein sequence, read N- to C-terminus: Cytochrome P450 monooxygenase alt3 (509 aa).

The helical transmembrane segment at 25–45 threads the bilayer; sequence IITGIIVLPVLYVLLKVIYNL. C450 provides a ligand contact to heme.

Belongs to the cytochrome P450 family. Heme is required as a cofactor.

It localises to the membrane. The protein operates within secondary metabolite biosynthesis. Its function is as follows. Cytochrome P450 monooxygenase; part of the gene cluster that mediates the biosynthesis of alternapyrone derivatives. Alternapyrone is a decaketide with octa-methylation from methionine on every C2 unit except the third unit. All the domains in the polyketide synthase alt5 are apparently involved in alternapyrone synthesis, that is, the 8 CMeT, 7 KR, 7 DH, and 4 ER reactions in the 9 KS-mediated condensation steps required for alternapyrone synthesis. the alternapyrone produced by alt5 might be intensively modified by cytochrome P450 monooxygenases alt1, alt2 and alt3 and FAD-dependent oxidoreductase alt4 present in the alt gene cluster. The sequence is that of Cytochrome P450 monooxygenase alt3 from Alternaria solani.